The sequence spans 1069 residues: RE1-silencing transcription factor (1069 aa).

The interaction with SIN3A stretch occupies residues 32–121 (DLHDLSKAEL…SLELSVVEPQ (90 aa)). Positions 43–57 (APQLIMLANVALTGE) are interaction with SIN3B. Residues 85 to 104 (SDSEGEGLEESAELKGDPSG) form a disordered region. The segment at 144-417 (PVAEDKCKNL…KSKHPTCPSK (274 aa)) is interaction with ZFP90. A C2H2-type 1 zinc finger spans residues 158–180 (FRCKPCQYEAESEEQFVHHIRVH). Residues 200–211 (SGASPSEEGEFS) are required for binding to the neuron-restrictive silencer element. 7 C2H2-type zinc fingers span residues 215–237 (IRCD…LKHH), 247–269 (YKCI…LRNH), 275–297 (YTCS…VRTH), 303–325 (YKCE…MRTH), 331–354 (FKCD…RQVH), 360–382 (LNCP…VELH), and 388–411 (FNCP…KSKH). Disordered stretches follow at residues 425 to 737 (KLKK…MELP) and 830 to 1022 (KASK…GKEG). Residues 451–482 (EQAKTKGVDASARRSERPVKGVGKDVPKEKKP) show a composition bias toward basic and acidic residues. The segment covering 484–493 (SNASVVQVTT) has biased composition (polar residues). Composition is skewed to basic and acidic residues over residues 498 to 511 (SAVE…KHTD) and 554 to 576 (ESKP…KADK). The span at 584–600 (KGGKKTALKTKTAKKGS) shows a compositional bias: basic residues. Residues 630-643 (AVVTPSGSTQTELS) show a composition bias toward polar residues. Pro residues-rich tracts occupy residues 679–706 (PSPP…PCPM) and 713–734 (PSPP…PLPM). 2 stretches are compositionally biased toward basic and acidic residues: residues 851 to 860 (RREETPKDQE) and 876 to 886 (GGTEEAGESRA). Over residues 894-904 (STSALSSEQSS) the composition is skewed to low complexity. Basic and acidic residues predominate over residues 930–943 (TEQKTDRVPLKDSA). Serine 948 carries the post-translational modification Phosphoserine. Residues 957-968 (EAAAPAVVASPP) are compositionally biased toward low complexity. Residues 981 to 1059 (EGIHSHDGSD…HLNRHLVNVY (79 aa)) form an interaction with RCOR1 region. The C2H2-type 9 zinc-finger motif lies at 1032-1054 (FVCIFCDRSFRKEKDYSKHLNRH).

As to quaternary structure, isoform 1 and isoform 6 form heterodimers. Isoform 6: Forms homodimers and homooligomers; binds to the neuron-restrictive silencer element (NRSE) as monomer. Interacts with SIN3A, SIN3B and RCOR1. Interacts with CDYL. Interacts with EHMT1 and EHMT2 only in the presence of CDYL. Part of a complex containing at least CDYL, REST, WIZ, SETB1, EHMT1 and EHMT2. Interacts (via zinc-finger DNA-binding domain) with ZFP90 (via N- and C-termini); the interaction inhibits REST repressor activity. Interacts (via C2H2-type zinc finger 5) with PRICKLE1. Interacts with FBXW11 and BTRC. Interacts with USP7. Post-translationally, O-glycosylated. Phosphorylated; phosphorylation is required for ubiquitination. In terms of processing, ubiquitinated; ubiquitination is mediated by BTRC and leads to proteasomal degradation in G2 phase. Ubiquitination increases during neuronal differentiation. Deubiquitinated by USP7; leading to its stabilization and promoting the maintenance of neural progenitor cells. In terms of tissue distribution, expressed in the hippocampus including the granule cell layer of the dentate gyrus, the pyramidal cell layers of CA1 and CA3, the apical and basilar dendrite layers of the stratum radiatum and stratum oriens of CA1, the stratum lucidum and stratum oriens of CA3 and in astroglia (at protein level). Expressed in the brain, with the highest levels in the neurons of hippocampus, pons/medulla and midbrain.

The protein localises to the nucleus. The protein resides in the cytoplasm. Transcriptional repressor which binds neuron-restrictive silencer element (NRSE) and represses neuronal gene transcription in non-neuronal cells. Restricts the expression of neuronal genes by associating with two distinct corepressors, SIN3A and RCOR1, which in turn recruit histone deacetylase to the promoters of REST-regulated genes. Mediates repression by recruiting the BHC complex at RE1/NRSE sites which acts by deacetylating and demethylating specific sites on histones, thereby acting as a chromatin modifier. Transcriptional repression by REST-CDYL via the recruitment of histone methyltransferase EHMT2 may be important in transformation suppression. Represses the expression of SRRM4 in non-neural cells to prevent the activation of neural-specific splicing events and to prevent production of REST isoform 6. Repressor activity may be inhibited by forming heterodimers with isoform 6, thereby preventing binding to NRSE or binding to corepressors and leading to derepression of target genes. Also maintains repression of neuronal genes in neural stem cells, and allows transcription and differentiation into neurons by dissociation from RE1/NRSE sites of target genes. Thereby is involved in maintaining the quiescent state of adult hippocampal neural stem cells and preventing premature differentiation into mature neurons. Plays a role in the developmental switch in synaptic NMDA receptor composition during postnatal development, by repressing GRIN2B expression and thereby altering NMDA receptor properties from containing primarily GRIN2B to primarily GRIN2A subunits. Acts as a regulator of osteoblast differentiation. Key repressor of gene expression in hypoxia; represses genes in hypoxia by direct binding to an RE1/NRSE site on their promoter regions. May also function in stress resistance in the brain during aging; possibly by regulating expression of genes involved in cell death and in the stress response. Repressor of gene expression in the hippocampus after ischemia by directly binding to RE1/NRSE sites and recruiting SIN3A and RCOR1 to promoters of target genes, thereby promoting changes in chromatin modifications and ischemia-induced cell death. After ischemia, might play a role in repression of miR-132 expression in hippocampal neurons, thereby leading to neuronal cell death. Its function is as follows. Binds to the 3' region of the neuron-restrictive silencer element (NRSE), with lower affinity than full-length REST isoform 1. Exhibits weaker repressor activity compared to isoform 1. May negatively regulate the repressor activity of isoform 1 by binding to isoform 1, thereby preventing its binding to NRSE and leading to derepression of target genes. However, in another study, does not appear to be implicated in repressor activity of a NRSE motif-containing reporter construct nor in inhibitory activity on the isoform 1 transcriptional repressor activity. Post-transcriptional inactivation of REST by SRRM4-dependent alternative splicing into isoform 6 is required in mechanosensory hair cells in the inner ear for derepression of neuronal genes and hearing. This Rattus norvegicus (Rat) protein is RE1-silencing transcription factor (Rest).